A 429-amino-acid chain; its full sequence is Phosphoribosylamine--glycine ligase (429 aa).

The ATP-grasp domain occupies 109–316; sequence KDFLARHQIP…LVELCLAAID (208 aa). Position 135 to 196 (135 to 196) interacts with ATP; the sequence is VREQGAPIVV…EEFLDGEEAS (62 aa). The segment at 212–234 is disordered; it reads SQDHKRVGDKDTGPNTGGMGAYS. The span at 213-223 shows a compositional bias: basic and acidic residues; that stretch reads QDHKRVGDKDT. E286 and N288 together coordinate Mg(2+).

It belongs to the GARS family. Mg(2+) serves as cofactor. It depends on Mn(2+) as a cofactor.

The enzyme catalyses 5-phospho-beta-D-ribosylamine + glycine + ATP = N(1)-(5-phospho-beta-D-ribosyl)glycinamide + ADP + phosphate + H(+). It functions in the pathway purine metabolism; IMP biosynthesis via de novo pathway; N(1)-(5-phospho-D-ribosyl)glycinamide from 5-phospho-alpha-D-ribose 1-diphosphate: step 2/2. This chain is Phosphoribosylamine--glycine ligase, found in Vibrio vulnificus (strain CMCP6).